A 115-amino-acid polypeptide reads, in one-letter code: MNMMLAMLINITLSLCLISLAFWLPQLNLYSEKASPYECGFDPMSSARLPFSMKFFLVGITFLLLDLEIALLLPLPWAIQSTNMITTTIVSLSLVSILALGLSYEWMNKGLEWTE.

3 helical membrane passes run 4–24, 55–75, and 84–104; these read MLAMLINITLSLCLISLAFWL, FFLVGITFLLLDLEIALLLPL, and MITTTIVSLSLVSILALGLSY.

It belongs to the complex I subunit 3 family. Core subunit of respiratory chain NADH dehydrogenase (Complex I) which is composed of 45 different subunits. Interacts with TMEM186. Interacts with TMEM242.

The protein localises to the mitochondrion inner membrane. It carries out the reaction a ubiquinone + NADH + 5 H(+)(in) = a ubiquinol + NAD(+) + 4 H(+)(out). Its function is as follows. Core subunit of the mitochondrial membrane respiratory chain NADH dehydrogenase (Complex I) which catalyzes electron transfer from NADH through the respiratory chain, using ubiquinone as an electron acceptor. Essential for the catalytic activity of complex I. This is NADH-ubiquinone oxidoreductase chain 3 from Reithrodon auritus (Bunny rat).